The sequence spans 124 residues: Fluoride-specific ion channel FluC (124 aa).

The next 4 membrane-spanning stretches (helical) occupy residues 4 to 24 (VLFVALGGSIGAVLRYLISLL), 35 to 55 (FGTLVVNILGSFLMGVIFALG), 62 to 82 (PEFKAFIGVGMLGALTTFSTF), and 95 to 115 (LVKAVFNVVVNVGVCIFVVYL). Residues Gly74 and Thr77 each coordinate Na(+).

Belongs to the fluoride channel Fluc/FEX (TC 1.A.43) family.

It is found in the cell inner membrane. It catalyses the reaction fluoride(in) = fluoride(out). Na(+) is not transported, but it plays an essential structural role and its presence is essential for fluoride channel function. Its function is as follows. Fluoride-specific ion channel. Important for reducing fluoride concentration in the cell, thus reducing its toxicity. The polypeptide is Fluoride-specific ion channel FluC (Shewanella pealeana (strain ATCC 700345 / ANG-SQ1)).